The sequence spans 341 residues: Antihemorrhagic factor BJ46a (341 aa).

An N-terminal signal peptide occupies residues M1–S19. Cystatin fetuin-A-type domains lie at V22–H130 and R141–V254. Residues R23–D25 carry the Cell attachment site motif. Intrachain disulfides connect C28–C332, C85–C96, C110–C129, C143–C146, C205–C217, and C230–C253. N-linked (GlcNAc...) asparagine glycosylation is present at N95. N-linked (GlcNAc...) asparagine glycosylation occurs at N204. N282 and N293 each carry an N-linked (GlcNAc...) asparagine glycan.

As to quaternary structure, homodimer. In terms of tissue distribution, expressed by the liver.

It is found in the secreted. Its function is as follows. Potent inhibitor of hemorrhagic activity but also proteolytic activities of atrolysin C and jararhagin. Inhibition occurs by formation of a non-covalent complex between BJ46a and the proteinases at their metalloproteinase domains. In Bothrops jararaca (Jararaca), this protein is Antihemorrhagic factor BJ46a.